The primary structure comprises 57 residues: uncharacterized protein (57 aa).

An N-terminal signal peptide occupies residues 1–24; it reads MYDTWFVLTAVVLFVLVLIGNVHG.

In terms of tissue distribution, prismatic layer of shell (at protein level).

It is found in the secreted. This is an uncharacterized protein from Margaritifera margaritifera (Freshwater pearl mussel).